The following is a 68-amino-acid chain: Conotoxin Lt5.2 (68 aa).

Positions 1–19 (MLCLPVFIILLLLASPAAP) are cleaved as a signal peptide. Residues 20–54 (KSLETRIQNDLIRAGLTDADLKTEKGFLSGLLNVA) constitute a propeptide that is removed on maturation.

It belongs to the conotoxin T superfamily. Post-translationally, contains 2 disulfide bonds that can be either 'C1-C3, C2-C4' or 'C1-C4, C2-C3', since these disulfide connectivities have been observed for conotoxins with cysteine framework V (for examples, see AC P0DQQ7 and AC P81755). As to expression, expressed by the venom duct.

It localises to the secreted. This Conus litteratus (Lettered cone) protein is Conotoxin Lt5.2.